The primary structure comprises 478 residues: MEKRLRLAPSPTGLLHIGTARTALFNWLYAKKTNGKFFIRIEDTDIVRSKSEYTTNILDGLNWLGLSWDEEPIKQSKRISIYKKNIKKLLEIGAAYRCFTSESEISELREKQKSSGLPPRHDNRHRNLTSNEIKAFLSQGRSSVIRFKIDDETEIKWEDQIRGEIKWKGRDLGGDLVLSRRALGDEIGDPLYNLAVVVDDNFMNITHVVRGEDHISNTAKQILIYKALNFKLPIFSHTPLILNSEGKKLSKRDCVTSIDEFREMGYLPEALANYMAFLGWSIKDSESEILSLKEISRVFNLSDINKAGAKFNWEKLNWINSQYIKQMELTKLRQLIKNYWDDMGWESPSAEWDLKLINLIRDSMLLLKDAIDQSKPFFTLSQMQKEGEEFLNNKDETRESLKYILCYLKEENISTIDSNKAKEIIHKISVENSIKKGILMKSLRVAFFGCLSGPDLIQSWELFSENKSDITLIERCLI.

A 'HIGH' region motif is present at residues 9–19; the sequence is PSPTGLLHIGT. Residues 248–252 carry the 'KMSKS' region motif; the sequence is KLSKR. Lys-251 contributes to the ATP binding site.

Belongs to the class-I aminoacyl-tRNA synthetase family. Glutamate--tRNA ligase type 1 subfamily. As to quaternary structure, monomer.

The protein localises to the cytoplasm. The catalysed reaction is tRNA(Glu) + L-glutamate + ATP = L-glutamyl-tRNA(Glu) + AMP + diphosphate. Its function is as follows. Catalyzes the attachment of glutamate to tRNA(Glu) in a two-step reaction: glutamate is first activated by ATP to form Glu-AMP and then transferred to the acceptor end of tRNA(Glu). This Prochlorococcus marinus (strain MIT 9515) protein is Glutamate--tRNA ligase.